The primary structure comprises 372 residues: N-methyl-L-tryptophan oxidase (372 aa).

An FAD-binding site is contributed by 4-34 (DLIIIGSGSVGAAAGYYATRAGLNVLMTDAH). An S-8alpha-FAD cysteine modification is found at cysteine 308.

This sequence belongs to the MSOX/MTOX family. MTOX subfamily. As to quaternary structure, monomer. The cofactor is FAD.

It catalyses the reaction N(alpha)-methyl-L-tryptophan + O2 + H2O = L-tryptophan + formaldehyde + H2O2. Functionally, catalyzes the oxidative demethylation of N-methyl-L-tryptophan. The sequence is that of N-methyl-L-tryptophan oxidase from Escherichia coli (strain SMS-3-5 / SECEC).